A 265-amino-acid polypeptide reads, in one-letter code: H-2 class II histocompatibility antigen, A beta chain (265 aa).

An N-terminal signal peptide occupies residues 1 to 27 (MALQIPSLLLSAAVVVLMVLSSPGTEG). The beta-1 stretch occupies residues 28-122 (GDSERHFVYQ…PETHTSLRRL (95 aa)). Residues 28–226 (GDSERHFVYQ…RAQSESAWSK (199 aa)) are Extracellular-facing. 2 cysteine pairs are disulfide-bonded: Cys-42–Cys-106 and Cys-145–Cys-201. N-linked (GlcNAc...) asparagine glycosylation is present at Asn-46. The beta-2 stretch occupies residues 123–216 (EQPNVVISLS…SLKSPITVEW (94 aa)). Residues 125–213 (PNVVISLSRT…EHPSLKSPIT (89 aa)) enclose the Ig-like C1-type domain. Positions 217-226 (RAQSESAWSK) are connecting peptide. A helical membrane pass occupies residues 227-247 (MLSGIGGCVLGVIFLGLGLFI). Residues 248-265 (RHRSQKGPRGPPPAGLLQ) are Cytoplasmic-facing.

The protein belongs to the MHC class II family. Ubiquitinated in immature dendritic cells leading to down-regulation of MHC class II.

The protein resides in the membrane. The polypeptide is H-2 class II histocompatibility antigen, A beta chain (H2-Ab1) (Mus musculus (Mouse)).